Consider the following 365-residue polypeptide: Protein RecA (365 aa).

73–80 (GPESSGKT) provides a ligand contact to ATP.

The protein belongs to the RecA family.

The protein resides in the cytoplasm. In terms of biological role, can catalyze the hydrolysis of ATP in the presence of single-stranded DNA, the ATP-dependent uptake of single-stranded DNA by duplex DNA, and the ATP-dependent hybridization of homologous single-stranded DNAs. It interacts with LexA causing its activation and leading to its autocatalytic cleavage. In Prochlorococcus marinus (strain MIT 9301), this protein is Protein RecA.